The following is a 267-amino-acid chain: Glutamate 5-kinase (267 aa).

ATP is bound at residue K14. 3 residues coordinate substrate: S54, D141, and N157. Residues 177-178 and 219-225 contribute to the ATP site; these read SD and TGGMMSK.

The protein belongs to the glutamate 5-kinase family.

It localises to the cytoplasm. It catalyses the reaction L-glutamate + ATP = L-glutamyl 5-phosphate + ADP. It functions in the pathway amino-acid biosynthesis; L-proline biosynthesis; L-glutamate 5-semialdehyde from L-glutamate: step 1/2. Catalyzes the transfer of a phosphate group to glutamate to form L-glutamate 5-phosphate. This Streptococcus thermophilus (strain CNRZ 1066) protein is Glutamate 5-kinase.